The sequence spans 39 residues: Potassium channel toxin alpha-KTx 2.2 (39 aa).

Disulfide bonds link Cys-7-Cys-29, Cys-13-Cys-34, and Cys-17-Cys-36. An interaction with Kv1.3 channels region spans residues 37–39 (YPH).

The protein belongs to the short scorpion toxin superfamily. Potassium channel inhibitor family. Alpha-KTx 02 subfamily. In terms of tissue distribution, expressed by the venom gland.

It is found in the secreted. In terms of biological role, potent inhibitor of voltage-gated potassium channels such as Kv1.1/KCNA1 (IC(50)=0.144 nM), Kv1.2/KCNA2 (IC(50)=0.675 nM), Kv1.3/KCNA3 (IC(50)=0.23 nM) and Shaker (Kd=160 nM). Suppresses expression of the Kv1.3/KCNA3 channel in lipopolysaccharide (LPS)-stimulated mouse macrophages. Down-regulates secretion of nitric oxide (NO) and inflammatory cytokines, such as TNF-alpha/TNF, IL-1beta/IL1B and IL6, in LPS-stimulated mouse macrophages in a manner dependent on Kv1.3/KCNA3 channel blockage. Reduces activation of MAPK and NF-kappa-B signaling pathways in LPS-stimulated mouse macrophages. Modulates intracellular Ca(2+) signaling in human PMA/ionomycin-triggered T-cells. Interferes with the activation of the MAPK, NF-kappa-B and NFATc1 pathways in human PMA/ionomycin-triggered T-cells. Reduces proliferation of human PMA/ionomycin-triggered T-cells. Down-regulates secretion of cytokines, such as TNF-alpha/TNF and IL2, in human PMA/ionomycin-triggered T-cells. The sequence is that of Potassium channel toxin alpha-KTx 2.2 from Centruroides margaritatus (Central American bark Scorpion).